The primary structure comprises 420 residues: S-adenosylmethionine synthase (420 aa).

His16 is an ATP binding site. Asp18 is a Mg(2+) binding site. Glu44 contributes to the K(+) binding site. L-methionine is bound by residues Glu57 and Gln100. The segment at 100–110 (QSPDIAQGVNT) is flexible loop. ATP contacts are provided by residues 175 to 177 (DGK), 251 to 252 (KF), Asp260, 266 to 267 (RK), Ala283, and Lys287. Position 260 (Asp260) interacts with L-methionine. L-methionine is bound at residue Lys291.

This sequence belongs to the AdoMet synthase family. As to quaternary structure, homotetramer; dimer of dimers. Requires Mg(2+) as cofactor. It depends on K(+) as a cofactor.

Its subcellular location is the cytoplasm. The enzyme catalyses L-methionine + ATP + H2O = S-adenosyl-L-methionine + phosphate + diphosphate. Its pathway is amino-acid biosynthesis; S-adenosyl-L-methionine biosynthesis; S-adenosyl-L-methionine from L-methionine: step 1/1. In terms of biological role, catalyzes the formation of S-adenosylmethionine (AdoMet) from methionine and ATP. The overall synthetic reaction is composed of two sequential steps, AdoMet formation and the subsequent tripolyphosphate hydrolysis which occurs prior to release of AdoMet from the enzyme. The chain is S-adenosylmethionine synthase from Trichormus variabilis (strain ATCC 29413 / PCC 7937) (Anabaena variabilis).